Here is an 89-residue protein sequence, read N- to C-terminus: LTSVFGGAAEPPRGGNPDSNTLISDTTTVICLDDYHSLDRGVTALDPRANDFDLMYEQVKKPDFDAYIDPQKLDELIYVESHLSNLSTK.

The tract at residues 1–22 is disordered; the sequence is LTSVFGGAAEPPRGGNPDSNTL.

The protein belongs to the phosphoribulokinase family.

It is found in the plastid. The protein localises to the chloroplast. It carries out the reaction D-ribulose 5-phosphate + ATP = D-ribulose 1,5-bisphosphate + ADP + H(+). Its pathway is carbohydrate biosynthesis; Calvin cycle. Light regulated via thioredoxin by reversible oxidation/reduction of sulfhydryl/disulfide groups. This chain is Phosphoribulokinase, chloroplastic, found in Vitis sp. (Grape).